Consider the following 239-residue polypeptide: ATP synthase subunit a, chloroplastic (239 aa).

The next 5 helical transmembrane spans lie at 30 to 50 (VLLV…LGTF), 87 to 107 (VPFI…GALV), 126 to 146 (INTT…AGLS), 191 to 211 (LVVA…VMVL), and 212 to 232 (GLFA…SYIG).

The protein belongs to the ATPase A chain family. As to quaternary structure, F-type ATPases have 2 components, CF(1) - the catalytic core - and CF(0) - the membrane proton channel. CF(1) has five subunits: alpha(3), beta(3), gamma(1), delta(1), epsilon(1). CF(0) has four main subunits: a, b, b' and c.

The protein resides in the plastid. It is found in the chloroplast thylakoid membrane. Functionally, key component of the proton channel; it plays a direct role in the translocation of protons across the membrane. This Cyanidium caldarium (Red alga) protein is ATP synthase subunit a, chloroplastic.